Reading from the N-terminus, the 657-residue chain is Glycogen debranching enzyme (657 aa).

Catalysis depends on Asp-336, which acts as the Nucleophile. Residue Glu-371 is the Proton donor of the active site. A disordered region spans residues 460–479 (ANGEENRDGTNNNYSNNHGK).

The protein belongs to the glycosyl hydrolase 13 family.

It catalyses the reaction Hydrolysis of (1-&gt;6)-alpha-D-glucosidic linkages to branches with degrees of polymerization of three or four glucose residues in limit dextrin.. Its pathway is glycan degradation; glycogen degradation. Functionally, removes maltotriose and maltotetraose chains that are attached by 1,6-alpha-linkage to the limit dextrin main chain, generating a debranched limit dextrin. This Escherichia coli (strain UTI89 / UPEC) protein is Glycogen debranching enzyme.